The following is a 435-amino-acid chain: Fez family zinc finger protein 2 (435 aa).

The Engrailed homology 1 repressor motif lies at 27–42; sequence SLAFSIERIMAKTSEP. 6 C2H2-type zinc fingers span residues 254-276, 282-304, 310-332, 338-360, 366-388, and 394-417; these read FTCE…MPVH, FVCK…KIIH, HKCN…IRIH, FVCE…KLTH, YKCT…MHTH, and FTCG…RKLH.

The protein belongs to the krueppel C2H2-type zinc-finger protein family.

It localises to the nucleus. Transcription repressor. Component of the regulatory cascade that controls the development of dopaminergic (DA) and serotonergic (5HT) neurons. This chain is Fez family zinc finger protein 2 (fezf2), found in Xenopus tropicalis (Western clawed frog).